The following is a 509-amino-acid chain: Pituitary homeobox homolog Ptx1 (509 aa).

Positions 70 to 98 (NGAGSAGSAESATTTSTALSSGSTGSSTV) are enriched in low complexity. 3 disordered regions span residues 70 to 125 (NGAG…SSVS), 148 to 171 (QDLVGGYSQHPHHTVVPPHTPKHE), and 204 to 273 (LNNF…HFTS). Positions 227–242 (RSVNETTIKTENISSS) are enriched in polar residues. Residues 243-258 (GHDEPMTTSGEEPKND) are compositionally biased toward basic and acidic residues. Residues 259–269 (KKNKRQRRQRT) are compositionally biased toward basic residues. The segment at residues 262-322 (KRQRRQRTHF…KNRRAKWRKR (61 aa)) is a DNA-binding region (homeobox). Residues 460–473 (SSIATLRLKAKQHA) carry the OAR motif. Positions 464–470 (TLRLKAK) match the Nuclear localization signal motif.

It belongs to the paired homeobox family. Bicoid subfamily.

The protein localises to the nucleus. Appears to control physiological cell functions rather than pattern formation during embryogenesis. This is Pituitary homeobox homolog Ptx1 (Ptx1) from Drosophila melanogaster (Fruit fly).